A 121-amino-acid polypeptide reads, in one-letter code: Ribosome-binding factor A (121 aa).

The protein belongs to the RbfA family. As to quaternary structure, monomer. Binds 30S ribosomal subunits, but not 50S ribosomal subunits or 70S ribosomes.

It is found in the cytoplasm. Its function is as follows. One of several proteins that assist in the late maturation steps of the functional core of the 30S ribosomal subunit. Associates with free 30S ribosomal subunits (but not with 30S subunits that are part of 70S ribosomes or polysomes). Required for efficient processing of 16S rRNA. May interact with the 5'-terminal helix region of 16S rRNA. The chain is Ribosome-binding factor A from Hydrogenovibrio crunogenus (strain DSM 25203 / XCL-2) (Thiomicrospira crunogena).